The chain runs to 969 residues: RNA polymerase-associated protein RapA (969 aa).

Residues 162-339 enclose the Helicase ATP-binding domain; sequence EVGQRVAPRV…FARLALLDAD (178 aa). Residue 175 to 182 coordinates ATP; the sequence is DEVGLGKT. Residues 285-288 carry the DEAH box motif; sequence DEAH. The region spanning 492–663 is the Helicase C-terminal domain; sequence RIEWLITFLK…GFLKNPQAVG (172 aa).

This sequence belongs to the SNF2/RAD54 helicase family. RapA subfamily. In terms of assembly, interacts with the RNAP. Has a higher affinity for the core RNAP than for the holoenzyme. Its ATPase activity is stimulated by binding to RNAP.

Functionally, transcription regulator that activates transcription by stimulating RNA polymerase (RNAP) recycling in case of stress conditions such as supercoiled DNA or high salt concentrations. Probably acts by releasing the RNAP, when it is trapped or immobilized on tightly supercoiled DNA. Does not activate transcription on linear DNA. Probably not involved in DNA repair. This is RNA polymerase-associated protein RapA from Actinobacillus pleuropneumoniae serotype 5b (strain L20).